The primary structure comprises 412 residues: Histidine--tRNA ligase (412 aa).

The protein belongs to the class-II aminoacyl-tRNA synthetase family. In terms of assembly, homodimer.

It localises to the cytoplasm. The enzyme catalyses tRNA(His) + L-histidine + ATP = L-histidyl-tRNA(His) + AMP + diphosphate + H(+). This is Histidine--tRNA ligase from Rickettsia typhi (strain ATCC VR-144 / Wilmington).